Reading from the N-terminus, the 770-residue chain is Endothelin-converting enzyme 1 (770 aa).

Topologically, residues Met1–Arg68 are cytoplasmic. Thr25 bears the Phosphothreonine mark. The chain crosses the membrane as a helical; Signal-anchor for type II membrane protein span at residues Leu69–Ile89. Residues Gln90–Trp770 lie on the Extracellular side of the membrane. The 673-residue stretch at Val98–Trp770 folds into the Peptidase M13 domain. 5 cysteine pairs are disulfide-bonded: Cys99–Cys104, Cys122–Cys755, Cys130–Cys715, Cys185–Cys435, and Cys644–Cys767. Residues Asn166, Asn187, Asn210, Asn270, Asn316, Asn362, Asn383, and Asn539 are each glycosylated (N-linked (GlcNAc...) asparagine). Residue His607 participates in Zn(2+) binding. The active site involves Glu608. His611 lines the Zn(2+) pocket. N-linked (GlcNAc...) asparagine glycans are attached at residues Asn632 and Asn651. Glu667 lines the Zn(2+) pocket. Catalysis depends on Asp671, which acts as the Proton donor.

The protein belongs to the peptidase M13 family. Homodimer; disulfide-linked. Interacts with PPP1R16B. Interacts with TSPAN8; this interaction recruits the endothelin converting enzyme ECE1 to tetraspanin-enriched microdomains and positively modulates its enzymatic activity. Zn(2+) serves as cofactor. As to expression, all isoforms are expressed in umbilical vein endothelial cells, polynuclear neutrophils, fibroblasts, atrium cardiomyocytes and ventricles. Isoforms A, B and C are also expressed in placenta, lung, heart, adrenal gland and phaeochromocytoma; isoforms A and C in liver, testis and small intestine; isoform B, C and D in endothelial cells and umbilical vein smooth muscle cells; isoforms C and D in saphenous vein cells, and isoform C in kidney.

The protein resides in the cell membrane. The catalysed reaction is Hydrolysis of the 21-Trp-|-Val-22 bond in big endothelin to form endothelin 1.. Its activity is regulated as follows. Inhibited by phosphoramidon. Activated by K49-P1-20, a twenty-residue synthetic peptide shortened from the snake B.asper myotoxin II. Its function is as follows. Converts big endothelin-1 to endothelin-1. This chain is Endothelin-converting enzyme 1 (ECE1), found in Homo sapiens (Human).